The sequence spans 1023 residues: Solute carrier family 12 member 3 (1023 aa).

The Cytoplasmic portion of the chain corresponds to 1–134 (MELPGDGVHL…EPPPEPPRFG (134 aa)). The tract at residues 91-131 (DPEQDDFKPPMYEETAGERMGGGDSSEEEEEEHKEPPPEPP) is disordered. The discontinuously helical transmembrane segment at 135-164 (WVQGVMIRCMLNIWGVILYLRLPWITAQAG) threads the bilayer. Leu-145 and Trp-148 together coordinate Na(+). A helical membrane pass occupies residues 165–186 (IGLTWVIILLSSFITGITGLST). Residues 187 to 217 (SAIATNGKVKGGGTYFLISRSLGPELGGSIG) are Cytoplasmic-facing. Residues 218 to 240 (LIFAFANAVAVAMHTVGFAETVT) form a helical membrane-spanning segment. Residues 241 to 252 (DLMRENGVVMVD) lie on the Extracellular side of the membrane. The next 2 membrane-spanning stretches (helical) occupy residues 253-277 (PIND…AGME) and 278-300 (WESK…YIVG). Residues 301–335 (TIIPASPQKQAKGFFSYKAEIFAANFVPGWRGKEG) are Extracellular-facing. A discontinuously helical membrane pass occupies residues 336–357 (SFFGMFSIFFPSATGILAGANI). Residues Gly-350, Ile-351, and Leu-352 each contribute to the chloride site. At 358–368 (SGDLKDPTVAI) the chain is on the cytoplasmic side. The chain crosses the membrane as a helical span at residues 369–390 (PRGTLMAIFWTTISYLIISATI). Residues 391–452 (GACVVRDASG…YQSMSLVSAF (62 aa)) are Extracellular-facing. N-linked (GlcNAc...) asparagine glycans are attached at residues Asn-403 and Asn-414. 2 cysteine pairs are disulfide-bonded: Cys-415–Cys-420 and Cys-429–Cys-435. The N-linked (GlcNAc...) asparagine glycan is linked to Asn-432. Residues 453-476 (APLISAGIFGATLSSALACLVSAP) form a helical membrane-spanning segment. Positions 463, 466, and 467 each coordinate Na(+). The Cytoplasmic segment spans residues 477–506 (KVFQCLCKDQLYPLIGFFGKGYGKNAEPLR). A helical transmembrane segment spans residues 507 to 521 (AYLLTYVIAVCFVLI). Over 522–526 (AELNT) the chain is Extracellular. A helical membrane pass occupies residues 527–543 (IAPIISNFFLCSYALIN). Chloride is bound at residue Tyr-539. At 544-566 (FSCFHASVTNSPGWRPSFRFYSK) the chain is on the cytoplasmic side. The next 2 helical transmembrane spans lie at 567-586 (WLSL…LTWW) and 587-598 (AALIAFGVVFFL). Over 599–1023 (LGYTLYKKPA…QENVLTFYCQ (425 aa)) the chain is Cytoplasmic. The tract at residues 614-629 (SVQASSYSMALNQCVG) is scissor helix. Positions 647, 654, 676, 733, and 772 each coordinate ATP.

The protein belongs to the SLC12A transporter family. Homodimer; adopts a domain-swap conformation at the scissor helices connecting the transmembrane domain and C-terminal domain. Expressed in urinary bladder, intestine, ovary, skeletal muscle, eye, brain, and kidney.

The protein resides in the cell membrane. The catalysed reaction is chloride(out) + Na(+)(out) = chloride(in) + Na(+)(in). With respect to regulation, inhibited by thiazide-type diuretics including polythiazide, metolazone, cyclothiazide, hydrochlorothiazide and chlorthalidone. Thiazide drugs, specifically inhibit SLC12A3/NCC transporter activity by competing with chloride for binding. In terms of biological role, electroneutral sodium and chloride ion cotransporter, with a coupling ratio 1 Na(+):1 Cl(-). Mediates sodium and chloride reabsorption. The sequence is that of Solute carrier family 12 member 3 (slc12a3) from Pseudopleuronectes americanus (Winter flounder).